The sequence spans 518 residues: GMP synthase [glutamine-hydrolyzing] (518 aa).

In terms of domain architecture, Glutamine amidotransferase type-1 spans 8–201; that stretch reads TVLIIDFGSQ…VHKISGLKGN (194 aa). Residue Cys-85 is the Nucleophile of the active site. Residues His-175 and Glu-177 contribute to the active site. The region spanning 202-393 is the GMPS ATP-PPase domain; sequence WSMASYRDQA…LGLPEQFLGR (192 aa). Residue 229–235 coordinates ATP; sequence SGGVDSS.

In terms of assembly, homodimer.

The catalysed reaction is XMP + L-glutamine + ATP + H2O = GMP + L-glutamate + AMP + diphosphate + 2 H(+). The protein operates within purine metabolism; GMP biosynthesis; GMP from XMP (L-Gln route): step 1/1. In terms of biological role, catalyzes the synthesis of GMP from XMP. This is GMP synthase [glutamine-hydrolyzing] from Bartonella quintana (strain Toulouse) (Rochalimaea quintana).